We begin with the raw amino-acid sequence, 261 residues long: uncharacterized protein (261 aa).

22 to 46 (IVTGGNSGLGQAFAMALAKAGANIF) is a binding site for NADP(+). Position 153 (S153) interacts with substrate. The Proton acceptor role is filled by Y166.

Belongs to the short-chain dehydrogenases/reductases (SDR) family.

This is an uncharacterized protein from Escherichia coli (strain K12).